Consider the following 402-residue polypeptide: Phosphoglycerate kinase (402 aa).

Residues 24–26, Arg40, 63–66, Arg122, and Arg155 contribute to the substrate site; these read DFN and HFGR. Residues Lys206, Gly297, Glu328, and 357-360 each bind ATP; that span reads GGDS.

This sequence belongs to the phosphoglycerate kinase family. In terms of assembly, monomer.

It is found in the cytoplasm. It catalyses the reaction (2R)-3-phosphoglycerate + ATP = (2R)-3-phospho-glyceroyl phosphate + ADP. Its pathway is carbohydrate degradation; glycolysis; pyruvate from D-glyceraldehyde 3-phosphate: step 2/5. In Synechococcus elongatus (strain ATCC 33912 / PCC 7942 / FACHB-805) (Anacystis nidulans R2), this protein is Phosphoglycerate kinase.